The primary structure comprises 784 residues: LPS-assembly protein LptD (784 aa).

An N-terminal signal peptide occupies residues 1–24 (MKKRIPTLLATMIATALYSQQGLA). Disulfide bonds link C31/C724 and C173/C725.

The protein belongs to the LptD family. In terms of assembly, component of the lipopolysaccharide transport and assembly complex. Interacts with LptE and LptA. Post-translationally, contains two intramolecular disulfide bonds.

Its subcellular location is the cell outer membrane. Functionally, together with LptE, is involved in the assembly of lipopolysaccharide (LPS) at the surface of the outer membrane. In Escherichia coli O1:K1 / APEC, this protein is LPS-assembly protein LptD.